A 536-amino-acid chain; its full sequence is Xylulose kinase (536 aa).

Residues His99, Arg170, Asp280, and Asn281 each contribute to the substrate site. ATP contacts are provided by residues Trp355, 441–442, and Asn445; that span reads GA.

This sequence belongs to the FGGY kinase family. Monomer.

The catalysed reaction is D-xylulose + ATP = D-xylulose 5-phosphate + ADP + H(+). In terms of biological role, phosphorylates D-xylulose to produce D-xylulose 5-phosphate, a molecule that may play an important role in the regulation of glucose metabolism and lipogenesis. This is Xylulose kinase (XYLB) from Homo sapiens (Human).